Reading from the N-terminus, the 342-residue chain is AA9 family lytic polysaccharide monooxygenase H (342 aa).

Positions 1–19 (MSKASALLAGLTGAALVAA) are cleaved as a signal peptide. Cu(2+)-binding residues include His-20 and His-106. 2 disulfide bridges follow: Cys-75–Cys-195 and Cys-117–Cys-121. O2 is bound by residues His-181 and Gln-190. Tyr-192 lines the Cu(2+) pocket. Residues 263–308 (ATVPGGGGANPTATTTAATSAAPSTTLRTTTTSAAQTTAPPSGDVQ) form a disordered region. Residues 272–305 (NPTATTTAATSAAPSTTLRTTTTSAAQTTAPPSG) are compositionally biased toward low complexity. In terms of domain architecture, CBM1 spans 306 to 342 (DVQTKYGQCGGNGWTGPTVCAPGSSCSVLNEWYSQCL).

It belongs to the polysaccharide monooxygenase AA9 family. Requires Cu(2+) as cofactor.

The protein localises to the secreted. The enzyme catalyses [(1-&gt;4)-beta-D-glucosyl]n+m + reduced acceptor + O2 = 4-dehydro-beta-D-glucosyl-[(1-&gt;4)-beta-D-glucosyl]n-1 + [(1-&gt;4)-beta-D-glucosyl]m + acceptor + H2O.. The presence of lignin presents a significant source of antioxidants, which probably increase the activity by trapping liberated oxidized fragments. In terms of biological role, lytic polysaccharide monooxygenase (LPMO) that depolymerizes crystalline and amorphous polysaccharides via the oxidation of scissile alpha- or beta-(1-4)-glycosidic bonds, yielding C1 or C4 oxidation products. Catalysis by LPMOs requires the reduction of the active-site copper from Cu(II) to Cu(I) by a reducing agent and H(2)O(2) or O(2) as a cosubstrate. Hydrolyzes weakly barley beta-glucan, carboxymethyl cellulose, lichenan, wheat arabinoxylan and birchwood xylan. Stimulates the hydrolysis of lignocellulosic substrates (such as hydrothermal pretreated wheat straw or steam-pretreated spruce), when combined with other cellulolytic enzymes. This chain is AA9 family lytic polysaccharide monooxygenase H, found in Thermothelomyces thermophilus (strain ATCC 42464 / BCRC 31852 / DSM 1799) (Sporotrichum thermophile).